The sequence spans 166 residues: Ribosome-binding factor A (166 aa).

The disordered stretch occupies residues 119 to 166 (VQAQAKSGVYAGDEDPYVKPRVIGEDEDEDDEDGDDIDRSAPGYEPAH). The span at 143–154 (EDEDEDDEDGDD) shows a compositional bias: acidic residues.

This sequence belongs to the RbfA family. As to quaternary structure, monomer. Binds 30S ribosomal subunits, but not 50S ribosomal subunits or 70S ribosomes.

It is found in the cytoplasm. Its function is as follows. One of several proteins that assist in the late maturation steps of the functional core of the 30S ribosomal subunit. Associates with free 30S ribosomal subunits (but not with 30S subunits that are part of 70S ribosomes or polysomes). Required for efficient processing of 16S rRNA. May interact with the 5'-terminal helix region of 16S rRNA. The polypeptide is Ribosome-binding factor A (Clavibacter michiganensis subsp. michiganensis (strain NCPPB 382)).